Consider the following 455-residue polypeptide: tRNA modification GTPase MnmE (455 aa).

Arginine 22, glutamate 85, and arginine 124 together coordinate (6S)-5-formyl-5,6,7,8-tetrahydrofolate. One can recognise a TrmE-type G domain in the interval 220–377; the sequence is GIYTVIVGRP…VEKAIKEAIL (158 aa). Asparagine 230 serves as a coordination point for K(+). Residues 230–235, 249–255, and 274–277 contribute to the GTP site; these read NVGKSS, TDIPGTT, and DTAG. A Mg(2+)-binding site is contributed by serine 234. K(+) is bound by residues threonine 249, isoleucine 251, and threonine 254. A Mg(2+)-binding site is contributed by threonine 255. Lysine 455 contributes to the (6S)-5-formyl-5,6,7,8-tetrahydrofolate binding site.

Belongs to the TRAFAC class TrmE-Era-EngA-EngB-Septin-like GTPase superfamily. TrmE GTPase family. As to quaternary structure, homodimer. Heterotetramer of two MnmE and two MnmG subunits. K(+) serves as cofactor.

Its subcellular location is the cytoplasm. Functionally, exhibits a very high intrinsic GTPase hydrolysis rate. Involved in the addition of a carboxymethylaminomethyl (cmnm) group at the wobble position (U34) of certain tRNAs, forming tRNA-cmnm(5)s(2)U34. This is tRNA modification GTPase MnmE from Caldicellulosiruptor saccharolyticus (strain ATCC 43494 / DSM 8903 / Tp8T 6331).